A 266-amino-acid polypeptide reads, in one-letter code: Undecaprenyl-diphosphatase (266 aa).

Helical transmembrane passes span 1–21 (MTLFEIIILAIIQGVTEFLPI), 39–59 (QGLAFDVAVHVGSLLAVMIYF), 87–107 (WYVIVGTIPAVIIGFLMKGWI), 113–133 (TALVIAGTTIIFGLLLWYADA), 143–163 (GLTLKQAIYIGLAQVLALIPG), 187–207 (FSFLLSIPVILGAGLLATLDL), 218–238 (ALLYGAAFSFVSAYLCIYLFL), and 244–264 (IGMLPFVIYRLALGAVLLWFV).

The protein belongs to the UppP family.

It is found in the cell inner membrane. The catalysed reaction is di-trans,octa-cis-undecaprenyl diphosphate + H2O = di-trans,octa-cis-undecaprenyl phosphate + phosphate + H(+). Functionally, catalyzes the dephosphorylation of undecaprenyl diphosphate (UPP). Confers resistance to bacitracin. The chain is Undecaprenyl-diphosphatase from Alteromonas mediterranea (strain DSM 17117 / CIP 110805 / LMG 28347 / Deep ecotype).